Reading from the N-terminus, the 365-residue chain is 3-isopropylmalate dehydrogenase (365 aa).

Residue 80-91 (GPKWGTGEVRPE) participates in NAD(+) binding. Residues arginine 98, arginine 108, arginine 137, and aspartate 226 each contribute to the substrate site. 3 residues coordinate Mg(2+): aspartate 226, aspartate 251, and aspartate 255. 290-301 (GSAPDLPKNKVN) lines the NAD(+) pocket.

It belongs to the isocitrate and isopropylmalate dehydrogenases family. As to quaternary structure, homodimer. Requires Mg(2+) as cofactor. Mn(2+) serves as cofactor.

The protein resides in the cytoplasm. It carries out the reaction (2R,3S)-3-isopropylmalate + NAD(+) = 4-methyl-2-oxopentanoate + CO2 + NADH. It functions in the pathway amino-acid biosynthesis; L-leucine biosynthesis; L-leucine from 3-methyl-2-oxobutanoate: step 3/4. Functionally, catalyzes the oxidation of 3-carboxy-2-hydroxy-4-methylpentanoate (3-isopropylmalate) to 3-carboxy-4-methyl-2-oxopentanoate. The product decarboxylates to 4-methyl-2 oxopentanoate. The sequence is that of 3-isopropylmalate dehydrogenase (LEU2) from Candida boidinii (Yeast).